Reading from the N-terminus, the 346-residue chain is STE20-related kinase adapter protein stlk (346 aa).

In terms of domain architecture, Protein kinase spans 10 to 298 (YKLLEILKNG…ASKLMTHSFL (289 aa)). ATP is bound by residues 16 to 24 (LKNGMIGTV) and Lys38.

This sequence belongs to the protein kinase superfamily. STE Ser/Thr protein kinase family. STE20 subfamily.

The protein is STE20-related kinase adapter protein stlk of Drosophila melanogaster (Fruit fly).